The following is a 585-amino-acid chain: Protein NRT1/ PTR FAMILY 4.6 (585 aa).

Helical transmembrane passes span 28 to 48 (GMLA…AYLA), 75 to 95 (FMGT…AFFS), 96 to 116 (TFQI…ILTI), 142 to 162 (AMLF…KGSL), 184 to 204 (FFNY…TFVV), 211 to 231 (GWEW…LIFL), 343 to 363 (IVLK…CLAQ), 391 to 411 (IFPV…IIPF), 428 to 448 (IGVG…VEIK), 465 to 485 (LPVT…ADLF), 508 to 528 (SLSW…VSIV), and 554 to 574 (FYWL…FWAM).

Belongs to the major facilitator superfamily. Proton-dependent oligopeptide transporter (POT/PTR) (TC 2.A.17) family. Expressed in root hairs and in epidermis of both root tips and mature regions of roots. Detected in shoots, stems, flowers, siliques and imbibed seeds. Expressed in vascular tissues in cotyledons, trus leaves, hypocotyls, roots and inflorescence stems.

It localises to the cell membrane. Low-affinity proton-dependent nitrate transporter. Involved in constitutive nitrate uptake. Not involved in histidine or dipeptides transport. Involved in (+)-abscisic acid (ABA) transport, but not in gibberellin, indole-3-acetic acid or jasmonic acid import. Mediates cellular ABA uptake. Nitrate does not compete with abscisic acid as a substrate of NPF4.6. This chain is Protein NRT1/ PTR FAMILY 4.6 (NPF4.6), found in Arabidopsis thaliana (Mouse-ear cress).